The chain runs to 165 residues: Large ribosomal subunit protein uL10 (165 aa).

This sequence belongs to the universal ribosomal protein uL10 family. In terms of assembly, part of the ribosomal stalk of the 50S ribosomal subunit. The N-terminus interacts with L11 and the large rRNA to form the base of the stalk. The C-terminus forms an elongated spine to which L12 dimers bind in a sequential fashion forming a multimeric L10(L12)X complex.

Its function is as follows. Forms part of the ribosomal stalk, playing a central role in the interaction of the ribosome with GTP-bound translation factors. The chain is Large ribosomal subunit protein uL10 from Burkholderia ambifaria (strain MC40-6).